The primary structure comprises 484 residues: Folate synthesis bifunctional protein (484 aa).

The interval 15 to 141 is HPPK; it reads VIALGSNVGN…PFVLAPLVDL (127 aa). Residues 202–470 form the Pterin-binding domain; the sequence is TYVMGILNLT…NVRDNVDAAR (269 aa). Residues 204–484 are DHPS; that stretch reads VMGILNLTPD…MMTKRFKNVD (281 aa). Asn209 contributes to the Mg(2+) binding site. Residues Thr249, Asp286, Asn305, Asp378, Lys423, and 458-460 contribute to the (7,8-dihydropterin-6-yl)methyl diphosphate site; that span reads RVH.

It in the N-terminal section; belongs to the HPPK family. This sequence in the C-terminal section; belongs to the DHPS family. It depends on Mg(2+) as a cofactor. Expressed exclusively in reproductive tissues.

It is found in the cytoplasm. The protein resides in the cytosol. It carries out the reaction 6-hydroxymethyl-7,8-dihydropterin + ATP = (7,8-dihydropterin-6-yl)methyl diphosphate + AMP + H(+). The enzyme catalyses (7,8-dihydropterin-6-yl)methyl diphosphate + 4-aminobenzoate = 7,8-dihydropteroate + diphosphate. The protein operates within cofactor biosynthesis; tetrahydrofolate biosynthesis; 2-amino-4-hydroxy-6-hydroxymethyl-7,8-dihydropteridine diphosphate from 7,8-dihydroneopterin triphosphate: step 4/4. It participates in cofactor biosynthesis; tetrahydrofolate biosynthesis; 7,8-dihydrofolate from 2-amino-4-hydroxy-6-hydroxymethyl-7,8-dihydropteridine diphosphate and 4-aminobenzoate: step 1/2. Inhibited by sulfanilamide. Its function is as follows. Catalyzes the first two consecutive steps of tetrahydrofolate biosynthesis. Plays a role in seed stress response and survival. The chain is Folate synthesis bifunctional protein from Arabidopsis thaliana (Mouse-ear cress).